The sequence spans 250 residues: 2,3-bisphosphoglycerate-dependent phosphoglycerate mutase (250 aa).

(2R)-2,3-bisphosphoglycerate contacts are provided by arginine 10, histidine 11, asparagine 17, glycine 24, arginine 62, glutamate 89, tyrosine 92, lysine 100, arginine 116, arginine 117, histidine 184, glycine 185, and asparagine 186. Catalysis depends on histidine 11, which acts as the Tele-phosphohistidine intermediate. Glycine 24 serves as a coordination point for (2R)-3-phosphoglycerate. (2R)-3-phosphoglycerate-binding residues include glutamate 89, tyrosine 92, lysine 100, arginine 116, and arginine 117. The active-site Proton donor/acceptor is glutamate 89. (2R)-3-phosphoglycerate is bound at residue asparagine 186.

Belongs to the phosphoglycerate mutase family. BPG-dependent PGAM subfamily. Ubiquitously expressed with the highest expression in the sub-tegumental muscle layer (at protein level). Expressed in the tegument (at protein level).

It is found in the tegument. It carries out the reaction (2R)-2-phosphoglycerate = (2R)-3-phosphoglycerate. It participates in carbohydrate degradation; glycolysis; pyruvate from D-glyceraldehyde 3-phosphate: step 3/5. With respect to regulation, strongly activated by 2,3-bisphosphoglycerate (2,3-BPG). Inhibited by vanadate in a dose-dependent manner. Catalyzes interconversion of 3- and 2-phosphoglycerate with 2,3-bisphosphoglycerate (2,3-BPG) as the primer of the reaction. Schistosomula have significant surface phosphoglycerate mutase activity also without 2,3-BPG. Binds human plasminogen and enhances its conversion to active thrombolytic plasmin in the presence of human tissue plasminogen activator (tPA) in vitro. Host-interactive surface protein, which may degrade vascular blood clots surrounding the worm in vivo and thus may help survival of the parasite in its host microenvironment. The chain is 2,3-bisphosphoglycerate-dependent phosphoglycerate mutase from Schistosoma mansoni (Blood fluke).